The chain runs to 51 residues: Lantibiotic lacticin-481 (51 aa).

Residues 1-24 (MKEQNSFNLLQEVTESELDLILGA) constitute a propeptide that is removed on maturation. The segment at residues 33–38 (TISHEC) is a cross-link (beta-methyllanthionine (Thr-Cys)). 2 cross-links (lanthionine (Ser-Cys)) span residues 35 to 49 (SHECNMNSWQFVFTC) and 42 to 50 (SWQFVFTCC). Residue Thr-48 is modified to (Z)-2,3-didehydrobutyrine.

Belongs to the type A lantibiotic family. Monomer or homodimer. Post-translationally, maturation of lantibiotics involves the enzymatic conversion of Thr, and Ser into dehydrated AA and the formation of thioether bonds with cysteine. This is followed by membrane translocation and cleavage of the modified precursor. In terms of processing, it is established that the 2,3-didehydrobutyrine is the Z-isomer.

Its function is as follows. Lanthionine-containing peptide antibiotic (lantibiotic) active on Gram-positive bacteria. The bactericidal activity of lantibiotics is based on depolarization of energized bacterial cytoplasmic membranes, initiated by the formation of aqueous transmembrane pores. Lacticin 481 is a broad spectrum bacteriocin exhibiting activity against a wide range of lactic acid bacteria and C.tyrobutyricum. This chain is Lantibiotic lacticin-481 (lctA), found in Lactococcus lactis subsp. lactis (Streptococcus lactis).